The chain runs to 76 residues: Sec-independent protein translocase protein TatA (76 aa).

Residues 1-21 (MGGLSIWHWLIVLLIVALVFG) form a helical membrane-spanning segment. The segment at 40-76 (KDGMKEGETPADAQQLPRSGAVDVNAKETTRSDSNKA) is disordered. Residues 64–76 (NAKETTRSDSNKA) are compositionally biased toward basic and acidic residues.

This sequence belongs to the TatA/E family. As to quaternary structure, the Tat system comprises two distinct complexes: a TatABC complex, containing multiple copies of TatA, TatB and TatC subunits, and a separate TatA complex, containing only TatA subunits. Substrates initially bind to the TatABC complex, which probably triggers association of the separate TatA complex to form the active translocon.

It is found in the cell inner membrane. In terms of biological role, part of the twin-arginine translocation (Tat) system that transports large folded proteins containing a characteristic twin-arginine motif in their signal peptide across membranes. TatA could form the protein-conducting channel of the Tat system. In Burkholderia cenocepacia (strain HI2424), this protein is Sec-independent protein translocase protein TatA.